We begin with the raw amino-acid sequence, 154 residues long: Interleukin-2 (154 aa).

An N-terminal signal peptide occupies residues 1 to 20 (MYKMQLLSCIALTLALVANG). The O-linked (GalNAc...) threonine glycan is linked to T23. A disulfide bridge connects residues C78 and C126.

The protein belongs to the IL-2 family.

Its subcellular location is the secreted. Its function is as follows. Cytokine produced by activated CD4-positive helper T-cells and to a lesser extend activated CD8-positive T-cells and natural killer (NK) cells that plays pivotal roles in the immune response and tolerance. Binds to a receptor complex composed of either the high-affinity trimeric IL-2R (IL2RA/CD25, IL2RB/CD122 and IL2RG/CD132) or the low-affinity dimeric IL-2R (IL2RB and IL2RG). Interaction with the receptor leads to oligomerization and conformation changes in the IL-2R subunits resulting in downstream signaling starting with phosphorylation of JAK1 and JAK3. In turn, JAK1 and JAK3 phosphorylate the receptor to form a docking site leading to the phosphorylation of several substrates including STAT5. This process leads to activation of several pathways including STAT, phosphoinositide-3-kinase/PI3K and mitogen-activated protein kinase/MAPK pathways. Functions as a T-cell growth factor and can increase NK-cell cytolytic activity as well. Promotes strong proliferation of activated B-cells and subsequently immunoglobulin production. Plays a pivotal role in regulating the adaptive immune system by controlling the survival and proliferation of regulatory T-cells, which are required for the maintenance of immune tolerance. Moreover, participates in the differentiation and homeostasis of effector T-cell subsets, including Th1, Th2, Th17 as well as memory CD8-positive T-cells. This Delphinapterus leucas (Beluga whale) protein is Interleukin-2 (IL2).